The sequence spans 822 residues: Aminopeptidase O (822 aa).

His480 contributes to the Zn(2+) binding site. Glu481 serves as the catalytic Proton acceptor. Residues His484 and Glu503 each coordinate Zn(2+). Residues 692–702 carry the Nucleolar localization signal motif; it reads RRPGKRQRRKR.

This sequence belongs to the peptidase M1 family. Zn(2+) is required as a cofactor.

The protein resides in the nucleus. It is found in the nucleolus. Its function is as follows. Aminopeptidase which catalyzes the hydrolysis of amino acid residues from the N-terminus of peptide or protein substrates. The protein is Aminopeptidase O (Aopep) of Rattus norvegicus (Rat).